Here is a 261-residue protein sequence, read N- to C-terminus: Phosphatidylglycerol--prolipoprotein diacylglyceryl transferase (261 aa).

A run of 7 helical transmembrane segments spans residues 19-39, 56-76, 92-112, 126-146, 173-193, 199-219, and 227-247; these read VHWYGLMYLVGFAMAWGLALY, LIFYGALGLIIGGRLGYMLFY, WRGGMSFHGGLIGVIVTTWIF, FVVPLVPLGLAAGRIGNFING, QLYEFLLEGVLLFIVIWWFSA, FAVSSLFLLCYGLFRFTAEFF, and GFVAFGWLTRGQELSLPMIII. Residue arginine 139 coordinates a 1,2-diacyl-sn-glycero-3-phospho-(1'-sn-glycerol).

The protein belongs to the Lgt family.

The protein localises to the cell inner membrane. The catalysed reaction is L-cysteinyl-[prolipoprotein] + a 1,2-diacyl-sn-glycero-3-phospho-(1'-sn-glycerol) = an S-1,2-diacyl-sn-glyceryl-L-cysteinyl-[prolipoprotein] + sn-glycerol 1-phosphate + H(+). The protein operates within protein modification; lipoprotein biosynthesis (diacylglyceryl transfer). In terms of biological role, catalyzes the transfer of the diacylglyceryl group from phosphatidylglycerol to the sulfhydryl group of the N-terminal cysteine of a prolipoprotein, the first step in the formation of mature lipoproteins. This is Phosphatidylglycerol--prolipoprotein diacylglyceryl transferase from Coxiella burnetii (strain CbuK_Q154) (Coxiella burnetii (strain Q154)).